A 366-amino-acid chain; its full sequence is Anhydro-N-acetylmuramic acid kinase (366 aa).

G12–D19 contributes to the ATP binding site.

The protein belongs to the anhydro-N-acetylmuramic acid kinase family.

The enzyme catalyses 1,6-anhydro-N-acetyl-beta-muramate + ATP + H2O = N-acetyl-D-muramate 6-phosphate + ADP + H(+). It functions in the pathway amino-sugar metabolism; 1,6-anhydro-N-acetylmuramate degradation. It participates in cell wall biogenesis; peptidoglycan recycling. In terms of biological role, catalyzes the specific phosphorylation of 1,6-anhydro-N-acetylmuramic acid (anhMurNAc) with the simultaneous cleavage of the 1,6-anhydro ring, generating MurNAc-6-P. Is required for the utilization of anhMurNAc either imported from the medium or derived from its own cell wall murein, and thus plays a role in cell wall recycling. The protein is Anhydro-N-acetylmuramic acid kinase of Neisseria meningitidis serogroup C (strain 053442).